The following is a 38-amino-acid chain: Large ribosomal subunit protein bL36 (38 aa).

The protein belongs to the bacterial ribosomal protein bL36 family.

The sequence is that of Large ribosomal subunit protein bL36 from Roseiflexus sp. (strain RS-1).